We begin with the raw amino-acid sequence, 215 residues long: Adenylate kinase (215 aa).

10–15 contacts ATP; it reads GAGKGT. The segment at 30-60 is NMP; that stretch reads STGDMLRAAIIKAGTEMGKQAKSVIDAGQLV. AMP is bound by residues threonine 31, arginine 36, 58–60, 86–89, and glutamine 93; these read QLV and GFPR. The LID stretch occupies residues 123–160; that stretch reads GRRAHLPSGRTYHVTFNPSKVEGQDDVTGEPLVIREDD. Residues arginine 124 and 133-134 contribute to the ATP site; that span reads TY. Residues arginine 157 and arginine 168 each contribute to the AMP site. Position 201 (lysine 201) interacts with ATP.

It belongs to the adenylate kinase family. As to quaternary structure, monomer.

It is found in the cytoplasm. The enzyme catalyses AMP + ATP = 2 ADP. It functions in the pathway purine metabolism; AMP biosynthesis via salvage pathway; AMP from ADP: step 1/1. Catalyzes the reversible transfer of the terminal phosphate group between ATP and AMP. Plays an important role in cellular energy homeostasis and in adenine nucleotide metabolism. The polypeptide is Adenylate kinase (Aliivibrio salmonicida (strain LFI1238) (Vibrio salmonicida (strain LFI1238))).